The primary structure comprises 305 residues: Foldase protein PrsA (305 aa).

The first 19 residues, 1 to 19 (MKKWFIALAGLLLTVTLAG), serve as a signal peptide directing secretion. A lipid anchor (N-palmitoyl cysteine) is attached at Cys20. Cys20 carries the S-diacylglycerol cysteine lipid modification. A PpiC domain is found at 136 to 235 (EPEVSVAHIL…YGYHVILMLK (100 aa)).

This sequence belongs to the PrsA family.

Its subcellular location is the cell membrane. It carries out the reaction [protein]-peptidylproline (omega=180) = [protein]-peptidylproline (omega=0). Plays a major role in protein secretion by helping the post-translocational extracellular folding of several secreted proteins. This is Foldase protein PrsA from Levilactobacillus brevis (strain ATCC 367 / BCRC 12310 / CIP 105137 / JCM 1170 / LMG 11437 / NCIMB 947 / NCTC 947) (Lactobacillus brevis).